The chain runs to 306 residues: Tricarboxylate transporter FUM11 (306 aa).

3 Solcar repeats span residues 18 to 98 (SDTL…YQKL), 109 to 195 (FGIL…LKQV), and 206 to 292 (IGTV…VVEG). 6 helical membrane passes run 24 to 44 (LVAG…AEFA), 67 to 87 (GLQW…KTSI), 113 to 133 (LAGF…SERI), 170 to 189 (GFWP…LGSY), 209 to 229 (VKTF…TQPL), and 267 to 286 (GAVA…FMVY).

Belongs to the mitochondrial carrier (TC 2.A.29) family.

Its subcellular location is the mitochondrion inner membrane. Its pathway is mycotoxin biosynthesis. Its function is as follows. Tricarboxylate transporter; part of the gene cluster that mediates the biosynthesis of fumonisins B1 (FB1), B2 (FB2), B3 (FB3), and B4 (FB4), which are carcinogenic mycotoxins. Within the pathway, FUM11 is involved the addition of the tricarballylic moieties to the carbon backbone. FUM11 makes a tricarboxylic acid precursor available for fumonisin biosynthesis via its export from the mitochondria. The biosynthesis starts with the FUM1-catalyzed carbon chain assembly from one molecule of acetyl-CoA, eight molecules of malonyl-CoA, and two molecules of methionine (in S-adenosyl form). The C18 polyketide chain is released from the enzyme by a nucleophilic attack of a carbanion, which is derived from R-carbon of alanine by decarboxylation, on the carbonyl carbon of polyketide acyl chain. This step is catalyzed by the pyridoxal 5'-phosphate-dependent aminoacyl transferase FUM8. The resultant 3-keto intermediate is then stereospecifically reduced to a 3-hydroxyl product by reductase FUM13. Subsequent oxidations at C-10 by the cytochrome P450 monooxygenase FUM2, C-14 and C-15 by FUM6, FUM12 or FUM15, tricarballylic esterification of the hydroxyl groups on C-14 and C-15 by acyltransferase FUM14, and C-5 hydroxylation by 2-keto-glutarate-dependent dioxygenase FUM3 furnish the biosynthesis of fumonisins. The tricarballylic moieties are most likely derived from the citric acid cycle, and their addition to the carbon backbone may involve FUM7, FUM10, FUM11 and FUM14. The protein is Tricarboxylate transporter FUM11 of Gibberella moniliformis (strain M3125 / FGSC 7600) (Maize ear and stalk rot fungus).